The sequence spans 141 residues: Hemoglobin subunit alpha (141 aa).

The Globin domain occupies 1–141; the sequence is VLSPADKANI…VSTVLTSKYR (141 aa). Ser3 bears the Phosphoserine mark. Residues Lys7 and Lys11 each carry the N6-succinyllysine modification. The residue at position 16 (Lys16) is an N6-acetyllysine; alternate. Lys16 is modified (N6-succinyllysine; alternate). Tyr24 is subject to Phosphotyrosine. Position 35 is a phosphoserine (Ser35). Lys40 carries the N6-succinyllysine modification. Ser49 carries the post-translational modification Phosphoserine. His58 contacts O2. His87 lines the heme b pocket. Ser102 carries the post-translational modification Phosphoserine. A Phosphothreonine modification is found at Thr108. 2 positions are modified to phosphoserine: Ser124 and Ser131. 2 positions are modified to phosphothreonine: Thr134 and Thr137. The residue at position 138 (Ser138) is a Phosphoserine.

Belongs to the globin family. Heterotetramer of two alpha chains and two beta chains. Red blood cells.

Functionally, involved in oxygen transport from the lung to the various peripheral tissues. Its function is as follows. Hemopressin acts as an antagonist peptide of the cannabinoid receptor CNR1. Hemopressin-binding efficiently blocks cannabinoid receptor CNR1 and subsequent signaling. This chain is Hemoglobin subunit alpha (HBA), found in Meles meles (Eurasian badger).